A 97-amino-acid polypeptide reads, in one-letter code: Co-chaperonin GroES (97 aa).

This sequence belongs to the GroES chaperonin family. In terms of assembly, heptamer of 7 subunits arranged in a ring. Interacts with the chaperonin GroEL.

Its subcellular location is the cytoplasm. In terms of biological role, together with the chaperonin GroEL, plays an essential role in assisting protein folding. The GroEL-GroES system forms a nano-cage that allows encapsulation of the non-native substrate proteins and provides a physical environment optimized to promote and accelerate protein folding. GroES binds to the apical surface of the GroEL ring, thereby capping the opening of the GroEL channel. The sequence is that of Co-chaperonin GroES from Symbiobacterium thermophilum (strain DSM 24528 / JCM 14929 / IAM 14863 / T).